We begin with the raw amino-acid sequence, 377 residues long: Transmembrane 6 superfamily member 2 (377 aa).

Transmembrane regions (helical) follow at residues 10–30 (IAAL…VSAL), 34–54 (LWVA…VYSL), 63–83 (PLYA…IIAL), 111–131 (FICY…AGAI), 140–160 (FGLY…TGNI), 170–190 (PAFF…MKVF), 219–239 (LALV…GLVV), 269–289 (MLMY…ALTF), and 332–352 (TWGC…LLAY). EXPERA domains are found at residues 61 to 186 (YDPL…CWAG) and 217 to 351 (ADLA…HLLA).

The protein belongs to the TM6SF family. Substantial expression in liver and intestine, whereas all other tissues analyzed show low levels.

It localises to the endoplasmic reticulum membrane. It is found in the endoplasmic reticulum-Golgi intermediate compartment membrane. Its function is as follows. Regulator of liver fat metabolism influencing triglyceride secretion and hepatic lipid droplet content. May function as sterol isomerase. This chain is Transmembrane 6 superfamily member 2 (TM6SF2), found in Homo sapiens (Human).